A 461-amino-acid polypeptide reads, in one-letter code: Sensor histidine kinase MctS (461 aa).

2 helical membrane passes run 7-27 (IIALAIVPLVISILAITTFIT) and 203-223 (FVIVALIDVPSVLVVFTTCML). Position 259 is a phosphohistidine; by autocatalysis (His-259). The Histidine kinase domain maps to 360 to 450 (LYRVAQEAFN…TLTAMMPKSA (91 aa)).

Its subcellular location is the cell membrane. It catalyses the reaction ATP + protein L-histidine = ADP + protein N-phospho-L-histidine.. Member of the two-component regulatory system MctS/MctR, which activates mctP expression. The sequence is that of Sensor histidine kinase MctS from Rhizobium johnstonii (strain DSM 114642 / LMG 32736 / 3841) (Rhizobium leguminosarum bv. viciae).